A 544-amino-acid chain; its full sequence is Secreted aspartic protease 9 (544 aa).

The signal sequence occupies residues 1–17 (MRLNSVALLSLVATALA). A disordered region spans residues 31–50 (GESKDDLSPEDDSNPRFVKR). Positions 65–479 (YMATLKIGSN…DLDDYEVSLA (415 aa)) constitute a Peptidase A1 domain. Residue D83 is part of the active site. 83–85 (DTG) provides a ligand contact to pepstatin A. A disulfide bond links C98 and C195. 3 N-linked (GlcNAc...) asparagine glycosylation sites follow: N212, N240, and N252. The active site involves D371. 371–375 (DTGST) contacts pepstatin A. Cysteines 406 and 441 form a disulfide. Residues N422 and N499 are each glycosylated (N-linked (GlcNAc...) asparagine). The segment at 500-519 (SSGSGTTSSSGTSTSTSTRH) is disordered. S520 is lipidated: GPI-anchor amidated serine. Residues 521–544 (AGSIISKPVYGLLLSLLISCYVLV) constitute a propeptide, removed in mature form. A helical membrane pass occupies residues 524–544 (IISKPVYGLLLSLLISCYVLV).

The protein belongs to the peptidase A1 family. In terms of assembly, monomer. In terms of processing, the GPI-anchor is attached to the protein in the endoplasmic reticulum and serves to target the protein to the cell surface. There, the glucosamine-inositol phospholipid moiety is cleaved off and the GPI-modified mannoprotein is covalently attached via its lipidless GPI glycan remnant to the 1,6-beta-glucan of the outer cell wall layer.

The protein localises to the cell membrane. It localises to the secreted. The protein resides in the cell wall. It catalyses the reaction Preferential cleavage at the carboxyl of hydrophobic amino acids, but fails to cleave 15-Leu-|-Tyr-16, 16-Tyr-|-Leu-17 and 24-Phe-|-Phe-25 of insulin B chain. Activates trypsinogen, and degrades keratin.. Its function is as follows. Secreted aspartic peptidases (SAPs) are a group of ten acidic hydrolases considered as key virulence factors. These enzymes supply the fungus with nutrient amino acids as well as are able to degrade the selected host's proteins involved in the immune defense. Moreover, acts toward human hemoglobin though limited proteolysis to generate a variety of antimicrobial hemocidins, enabling to compete with the other microorganisms of the same physiological niche using the microbicidal peptides generated from the host protein. Plays a key role in defense against host by cleaving histatin-5 (Hst 5), a peptide from human saliva that carries out fungicidal activity. The cleavage rate decreases in an order of SAP2 &gt; SAP9 &gt; SAP3 &gt; SAP7 &gt; SAP4 &gt; SAP1 &gt; SAP8. The first cleavage occurs between residues 'Lys-17' and 'His-18' of Hst 5, giving DSHAKRHHGYKRKFHEK and HHSHRGY peptides. Simultaneously, the DSHAKRHHGYKRK peptide is also formed. Further fragmentation by SAP9 results in FHEK product. This chain is Secreted aspartic protease 9, found in Candida albicans (strain SC5314 / ATCC MYA-2876) (Yeast).